Here is a 152-residue protein sequence, read N- to C-terminus: MSSLAFNYIVNLLSRREYSEFELRNKMQEKNFSEEEIDDALSLCQAKNWQSDRRFSENYLNSRSQKGCGVGRIRQELRQLKGVSSDIIDEVLMESEIDWYEMAENLLRKKFPNYNEQQTSKMKQKIWQYMLSHGFRSDEFADLIGQNQSEWD.

It belongs to the RecX family.

It localises to the cytoplasm. Its function is as follows. Modulates RecA activity. The protein is Regulatory protein RecX of Haemophilus influenzae (strain 86-028NP).